Reading from the N-terminus, the 258-residue chain is Cholera enterotoxin subunit A (258 aa).

The signal sequence occupies residues 1-18 (MVKIIFVFFIFLSSFSYA). NAD(+)-binding positions include 25 to 28 (RADS) and 41 to 43 (MPR). Glu-130 is a catalytic residue. Cys-205 and Cys-217 form a disulfide bridge.

Belongs to the enterotoxin A family. The holotoxin (choleragen) consists of a pentameric ring of B subunits whose central pore is occupied by the A subunit. The A subunit contains two chains, A1 and A2, linked by a disulfide bridge. Interaction with the host protein ARF6 causes a conformation change so that the enterotoxin subunit A1 can bind NAD and catalyze the ADP-ribosylation of the host Gs alpha.

In terms of biological role, the A1 chain catalyzes the ADP-ribosylation of Gs alpha, a GTP-binding regulatory protein, to activate the adenylate cyclase. This leads to an overproduction of cAMP and eventually to a hypersecretion of chloride and bicarbonate followed by water, resulting in the characteristic cholera stool. The A2 chain tethers A1 to the pentameric ring. This chain is Cholera enterotoxin subunit A (ctxA), found in Vibrio cholerae serotype O1 (strain ATCC 39315 / El Tor Inaba N16961).